Here is a 620-residue protein sequence, read N- to C-terminus: Delta(14)-sterol reductase LBR (620 aa).

The Tudor domain occupies 1 to 62; it reads MPGRKFADGE…DIKPLKSFKQ (62 aa). Topologically, residues 1 to 215 are nuclear; sequence MPGRKFADGE…TPQRRDLEFG (215 aa). The segment at 52–111 is disordered; sequence SDIKPLKSFKQRKSGSTSSSPSRRRSSRSRSRSRSRSPGRAPKGSRRSVSASYQADAKEK. Residue lysine 55 is modified to N6-acetyllysine. Residues serine 59 and serine 67 each carry the phosphoserine modification. Phosphoserine; by CDK1 is present on residues serine 71 and serine 86. The segment covering 73 to 88 has biased composition (basic residues); that stretch reads SRRRSSRSRSRSRSRS. Serine 88 bears the Phosphoserine mark. A glycan (O-linked (GlcNAc) serine) is linked at serine 96. 2 positions are modified to phosphoserine: serine 99 and serine 101. The residue at position 123 (threonine 123) is a Phosphothreonine. Position 133 is a phosphoserine (serine 133). Residue threonine 205 is modified to Phosphothreonine. 8 helical membrane passes run 216 to 236, 263 to 283, 304 to 324, 331 to 351, 452 to 472, 486 to 506, 525 to 547, and 566 to 586; these read GVPG…LLLL, VCGV…LPVG, LYAF…DIEL, FLQF…YLYA, IIHD…VPFT, DLSW…YVIF, LAHL…WWGF, and PCGF…ALLI. An N6-acetyllysine mark is found at lysine 599 and lysine 606.

This sequence belongs to the ERG4/ERG24 family. In terms of assembly, interacts with CBX5. Interacts with DNA. Interaction with DNA is sequence independent with higher affinity for supercoiled and relaxed circular DNA than linear DNA. Interacts with lamin B. Interacts with CLNK. Interacts with TMEM147; promoting LBR localization to the nucleus inner membrane. Phosphorylated by CDK1 in mitosis when the inner nuclear membrane breaks down into vesicles that dissociate from the lamina and the chromatin. It is phosphorylated by different protein kinases in interphase when the membrane is associated with these structures. Phosphorylation of LBR and HP1 proteins may be responsible for some of the alterations in chromatin organization and nuclear structure which occur at various times during the cell cycle. Phosphorylated by SRPK1. In late anaphase LBR is dephosphorylated, probably by PP1 and/or PP2A, allowing reassociation with chromatin.

It is found in the nucleus inner membrane. It localises to the nucleus. Its subcellular location is the cytoplasm. The protein resides in the endoplasmic reticulum membrane. It carries out the reaction 5alpha-cholest-8,14-dien-3beta-ol + NADPH + H(+) = 5alpha-cholest-8-en-3beta-ol + NADP(+). The enzyme catalyses 4,4-dimethyl-5alpha-cholesta-8,24-dien-3beta-ol + NADP(+) = 4,4-dimethyl-5alpha-cholesta-8,14,24-trien-3beta-ol + NADPH + H(+). It catalyses the reaction 4,4-dimethyl-8,14-cholestadien-3beta-ol + NADPH + H(+) = 4,4-dimethyl-5alpha-cholest-8-en-3beta-ol + NADP(+). Its pathway is steroid biosynthesis; cholesterol biosynthesis. Functionally, catalyzes the reduction of the C14-unsaturated bond of lanosterol, as part of the metabolic pathway leading to cholesterol biosynthesis. Plays a critical role in myeloid cell cholesterol biosynthesis which is essential to both myeloid cell growth and functional maturation. Mediates the activation of NADPH oxidases, perhaps by maintaining critical levels of cholesterol required for membrane lipid raft formation during neutrophil differentiation. Anchors the lamina and the heterochromatin to the inner nuclear membrane. In Rattus norvegicus (Rat), this protein is Delta(14)-sterol reductase LBR (Lbr).